Consider the following 1253-residue polypeptide: Myosin-1 (1253 aa).

The segment at 1-40 (MGHSRRPVGGEKKSRGFGRSKAAADVGDGRQAGKPQVKKA) is disordered. Residues 50–729 (IGVSDLTLLS…TLFALEAMRD (680 aa)) enclose the Myosin motor domain. 143 to 150 (GESGAGKT) contacts ATP. Ser371 bears the Phosphoserine mark. Residues 418 to 500 (SIGILDIYGF…PGVFAALNDA (83 aa)) form an actin-binding region. 2 consecutive IQ domains span residues 733-753 (HNMA…RIEC) and 754-779 (ATRI…QGHQ). In terms of domain architecture, TH1 spans 787-977 (RRRMSLLGSR…TIHTGAGEPA (191 aa)). Disordered stretches follow at residues 959–1083 (TGDD…PKKP) and 1139–1253 (QVAP…DDDW). The span at 1029–1055 (PQPAAAQPAAPQPAARVVPQPVAAVAA) shows a compositional bias: low complexity. Composition is skewed to pro residues over residues 1068-1081 (APPP…PAPK) and 1143-1155 (APKP…PPAA). The region spanning 1080 to 1141 (PKKPTAKALY…PEAYLEEQVA (62 aa)) is the SH3 domain. Composition is skewed to low complexity over residues 1156–1173 (PRST…AKAK) and 1221–1235 (NSAS…LAEA).

This sequence belongs to the TRAFAC class myosin-kinesin ATPase superfamily. Myosin family. In terms of processing, phosphorylation of the TEDS site (Ser-371) is required for the polarization of the actin cytoskeleton. Phosphorylation probably activates the myosin-I ATPase activity.

The protein localises to the cytoplasm. It localises to the cytoskeleton. The protein resides in the actin patch. Functionally, type-I myosin implicated in the organization of the actin cytoskeleton. Required for proper actin cytoskeleton polarization. At the cell cortex, assembles in patch-like structures together with proteins from the actin-polymerizing machinery and promotes actin assembly. Functions as actin nucleation-promoting factor (NPF) for the Arp2/3 complex. Plays an important role in polarized growth, spore germination, hyphal morphogenesis, and septal wall formation. The protein is Myosin-1 (myoA) of Aspergillus clavatus (strain ATCC 1007 / CBS 513.65 / DSM 816 / NCTC 3887 / NRRL 1 / QM 1276 / 107).